We begin with the raw amino-acid sequence, 138 residues long: Ribosome-binding factor A (138 aa).

The tract at residues 112 to 138 (EARTQGQAPAADVEPAPGAAPDDEAEE) is disordered. Positions 119 to 131 (APAADVEPAPGAA) are enriched in low complexity.

This sequence belongs to the RbfA family. As to quaternary structure, monomer. Binds 30S ribosomal subunits, but not 50S ribosomal subunits or 70S ribosomes.

It is found in the cytoplasm. In terms of biological role, one of several proteins that assist in the late maturation steps of the functional core of the 30S ribosomal subunit. Associates with free 30S ribosomal subunits (but not with 30S subunits that are part of 70S ribosomes or polysomes). Required for efficient processing of 16S rRNA. May interact with the 5'-terminal helix region of 16S rRNA. The polypeptide is Ribosome-binding factor A (Anaeromyxobacter sp. (strain K)).